Here is a 572-residue protein sequence, read N- to C-terminus: Proline--tRNA ligase (572 aa).

It belongs to the class-II aminoacyl-tRNA synthetase family. ProS type 1 subfamily. As to quaternary structure, homodimer.

The protein localises to the cytoplasm. The catalysed reaction is tRNA(Pro) + L-proline + ATP = L-prolyl-tRNA(Pro) + AMP + diphosphate. Catalyzes the attachment of proline to tRNA(Pro) in a two-step reaction: proline is first activated by ATP to form Pro-AMP and then transferred to the acceptor end of tRNA(Pro). As ProRS can inadvertently accommodate and process non-cognate amino acids such as alanine and cysteine, to avoid such errors it has two additional distinct editing activities against alanine. One activity is designated as 'pretransfer' editing and involves the tRNA(Pro)-independent hydrolysis of activated Ala-AMP. The other activity is designated 'posttransfer' editing and involves deacylation of mischarged Ala-tRNA(Pro). The misacylated Cys-tRNA(Pro) is not edited by ProRS. This Salmonella schwarzengrund (strain CVM19633) protein is Proline--tRNA ligase.